A 602-amino-acid chain; its full sequence is Glutamyl-tRNA(Gln) amidotransferase subunit B, mitochondrial (602 aa).

The transit peptide at Met1 to Thr56 directs the protein to the mitochondrion.

It belongs to the GatB/GatE family. GatB subfamily. As to quaternary structure, subunit of the heterotrimeric GatCAB amidotransferase (AdT) complex, composed of A, B and C subunits.

It is found in the mitochondrion. The enzyme catalyses L-glutamyl-tRNA(Gln) + L-glutamine + ATP + H2O = L-glutaminyl-tRNA(Gln) + L-glutamate + ADP + phosphate + H(+). Functionally, allows the formation of correctly charged Gln-tRNA(Gln) through the transamidation of misacylated Glu-tRNA(Gln) in the mitochondria. The reaction takes place in the presence of glutamine and ATP through an activated gamma-phospho-Glu-tRNA(Gln). The chain is Glutamyl-tRNA(Gln) amidotransferase subunit B, mitochondrial (nempA) from Emericella nidulans (strain FGSC A4 / ATCC 38163 / CBS 112.46 / NRRL 194 / M139) (Aspergillus nidulans).